The following is a 70-amino-acid chain: MASNAAVPFWRAAGMTYITYSNLCANMVRNCLKEPYRAEALSREKVHFSFSKWVDGKPQKPAIRSDTGEE.

It belongs to the eukaryotic ATPase epsilon family. In terms of assembly, F-type ATPases have 2 components, CF(1) - the catalytic core - and CF(0) - the membrane proton channel. CF(1) has five subunits: alpha(3), beta(3), gamma(1), delta(1), epsilon(1). CF(0) has three main subunits: a, b and c.

The protein resides in the mitochondrion. The protein localises to the mitochondrion inner membrane. Mitochondrial membrane ATP synthase (F(1)F(0) ATP synthase or Complex V) produces ATP from ADP in the presence of a proton gradient across the membrane which is generated by electron transport complexes of the respiratory chain. F-type ATPases consist of two structural domains, F(1) - containing the extramembraneous catalytic core, and F(0) - containing the membrane proton channel, linked together by a central stalk and a peripheral stalk. During catalysis, ATP synthesis in the catalytic domain of F(1) is coupled via a rotary mechanism of the central stalk subunits to proton translocation. Part of the complex F(1) domain and of the central stalk which is part of the complex rotary element. Rotation of the central stalk against the surrounding alpha(3)beta(3) subunits leads to hydrolysis of ATP in three separate catalytic sites on the beta subunits. This Ipomoea batatas (Sweet potato) protein is ATP synthase subunit epsilon, mitochondrial.